Reading from the N-terminus, the 152-residue chain is Small ribosomal subunit protein bS6 (152 aa).

Positions 96-152 (HEEGPSAMLQKRDRDDRGPREGGDRGPRREFGDRPPRRDGDFQRGPRPDRAPREDRA) are disordered.

Belongs to the bacterial ribosomal protein bS6 family.

Its function is as follows. Binds together with bS18 to 16S ribosomal RNA. This is Small ribosomal subunit protein bS6 from Rhizobium etli (strain ATCC 51251 / DSM 11541 / JCM 21823 / NBRC 15573 / CFN 42).